The primary structure comprises 109 residues: Large ribosomal subunit protein uL24 (109 aa).

Residues 1 to 24 (MANVTTDIKRNDTVAVTSGKDKGK) form a disordered region.

It belongs to the universal ribosomal protein uL24 family. In terms of assembly, part of the 50S ribosomal subunit.

Its function is as follows. One of two assembly initiator proteins, it binds directly to the 5'-end of the 23S rRNA, where it nucleates assembly of the 50S subunit. One of the proteins that surrounds the polypeptide exit tunnel on the outside of the subunit. The protein is Large ribosomal subunit protein uL24 of Koribacter versatilis (strain Ellin345).